The following is a 129-amino-acid chain: MARVKRAVNAHKKRRTVLKASKGYRGQRSRLYRKAKEQQLHSLGYAYRDRRARKGEFRKLWISRINAAARANDITYNRLIQGLKAADVDVDRKNLADIAISDPAAFTALVEVARSGLPEDVNVPSGEAA.

This sequence belongs to the bacterial ribosomal protein bL20 family.

Binds directly to 23S ribosomal RNA and is necessary for the in vitro assembly process of the 50S ribosomal subunit. It is not involved in the protein synthesizing functions of that subunit. In Mycobacterium leprae (strain Br4923), this protein is Large ribosomal subunit protein bL20.